Consider the following 638-residue polypeptide: Protein NSP-INTERACTING KINASE 1 (638 aa).

The first 31 residues, 1 to 31 (MESTIVMMMMITRSFFCFLGFLCLLCSSVHG), serve as a signal peptide directing secretion. Residues 32 to 248 (LLSPKGVNFE…AGGSRNHKMA (217 aa)) lie on the Extracellular side of the membrane. N-linked (GlcNAc...) asparagine glycans are attached at residues Asn92 and Asn103. 4 LRR repeats span residues 104–128 (LTNL…IGRL), 130–152 (RLET…VGYL), 153–175 (QSLQ…SLSN), and 177–200 (TQLA…AAKT). N-linked (GlcNAc...) asparagine glycans are attached at residues Asn162, Asn175, Asn188, Asn219, and Asn231. Residues 249–269 (IAVGSSVGTVSLIFIAVGLFL) traverse the membrane as a helical segment. Residues 270-638 (WWRQRHNQNT…VQAMELSGPR (369 aa)) lie on the Cytoplasmic side of the membrane. Thr309 is subject to Phosphothreonine. Positions 312 to 593 (FSSKNLLGKG…EGDGLAEKWE (282 aa)) constitute a Protein kinase domain. 318 to 326 (LGKGGYGNV) lines the ATP pocket. At Thr335 the chain carries Phosphothreonine. Residue Lys340 coordinates ATP. Residues Ser393 and Ser396 each carry the phosphoserine modification. The tract at residues 422 to 502 (YLHEQCDPKI…DVFGFGILLL (81 aa)) is interaction with geminivirus NSP protein. Asp435 acts as the Proton acceptor in catalysis. A phosphothreonine mark is found at Thr468, Thr469, and Thr474. Tyr482 is subject to Phosphotyrosine. Ser484 bears the Phosphoserine mark. Phosphothreonine is present on Thr485. Ser489 bears the Phosphoserine mark. Residue Thr566 is modified to Phosphothreonine.

It belongs to the protein kinase superfamily. Ser/Thr protein kinase family. As to quaternary structure, oligomer. Interacts with geminivirus nuclear shuttle protein (NSP). Interacts with RPL10A and RPL18B. In terms of processing, autophosphorylated. In terms of tissue distribution, expressed in seedlings, leaves, roots, stems and flowers.

The protein resides in the cell membrane. It carries out the reaction L-seryl-[protein] + ATP = O-phospho-L-seryl-[protein] + ADP + H(+). The enzyme catalyses L-threonyl-[protein] + ATP = O-phospho-L-threonyl-[protein] + ADP + H(+). Its activity is regulated as follows. Inhibited by the viral nuclear shuttle protein (NSP) that binds to the region required for oligomerization. In terms of biological role, involved in defense response to geminivirus and begomovirus infection via regulation of the nuclear trafficking of RPL10A. Phosphorylates RPL10A in vitro. Activation of NIK1 down-regulates cytosolic translation. The chain is Protein NSP-INTERACTING KINASE 1 from Arabidopsis thaliana (Mouse-ear cress).